Here is a 1109-residue protein sequence, read N- to C-terminus: Carbamoyl phosphate synthase large chain (1109 aa).

Residues 1–402 are carboxyphosphate synthetic domain; the sequence is MPKRTDLKSV…ALQKALRSLE (402 aa). Residues Arg-129, Arg-169, Gly-175, Gly-176, Glu-208, Ile-210, Glu-215, Gly-241, Val-242, His-243, Gln-285, and Glu-299 each coordinate ATP. The ATP-grasp 1 domain maps to 133–328; that stretch reads KGVVERCGAE…IAKIATKLSL (196 aa). Mg(2+) is bound by residues Gln-285, Glu-299, and Asn-301. Residues Gln-285, Glu-299, and Asn-301 each contribute to the Mn(2+) site. Residues 403 to 546 are oligomerization domain; the sequence is QKGSQLDFSS…YHYSAYDEED (144 aa). Residues 547–950 are carbamoyl phosphate synthetic domain; sequence EVALHSKPSI…AFAKSQAGAN (404 aa). In terms of domain architecture, ATP-grasp 2 spans 677-868; it reads SRVLDKAGLV…MAKAAALIGT (192 aa). 10 residues coordinate ATP: Arg-713, Arg-752, Leu-754, Glu-759, Gly-784, Ile-785, His-786, Ser-787, Gln-827, and Glu-839. Mg(2+) contacts are provided by Gln-827, Glu-839, and Asn-841. 3 residues coordinate Mn(2+): Gln-827, Glu-839, and Asn-841. Residues 951–1096 form the MGS-like domain; it reads NALPTEGKVF…QEHAAALGES (146 aa). Residues 951-1109 form an allosteric domain region; sequence NALPTEGKVF…AAAKADLQHA (159 aa).

Belongs to the CarB family. Composed of two chains; the small (or glutamine) chain promotes the hydrolysis of glutamine to ammonia, which is used by the large (or ammonia) chain to synthesize carbamoyl phosphate. Tetramer of heterodimers (alpha,beta)4. It depends on Mg(2+) as a cofactor. Mn(2+) is required as a cofactor.

It catalyses the reaction hydrogencarbonate + L-glutamine + 2 ATP + H2O = carbamoyl phosphate + L-glutamate + 2 ADP + phosphate + 2 H(+). The enzyme catalyses hydrogencarbonate + NH4(+) + 2 ATP = carbamoyl phosphate + 2 ADP + phosphate + 2 H(+). It participates in amino-acid biosynthesis; L-arginine biosynthesis; carbamoyl phosphate from bicarbonate: step 1/1. It functions in the pathway pyrimidine metabolism; UMP biosynthesis via de novo pathway; (S)-dihydroorotate from bicarbonate: step 1/3. Large subunit of the glutamine-dependent carbamoyl phosphate synthetase (CPSase). CPSase catalyzes the formation of carbamoyl phosphate from the ammonia moiety of glutamine, carbonate, and phosphate donated by ATP, constituting the first step of 2 biosynthetic pathways, one leading to arginine and/or urea and the other to pyrimidine nucleotides. The large subunit (synthetase) binds the substrates ammonia (free or transferred from glutamine from the small subunit), hydrogencarbonate and ATP and carries out an ATP-coupled ligase reaction, activating hydrogencarbonate by forming carboxy phosphate which reacts with ammonia to form carbamoyl phosphate. This Pseudarthrobacter chlorophenolicus (strain ATCC 700700 / DSM 12829 / CIP 107037 / JCM 12360 / KCTC 9906 / NCIMB 13794 / A6) (Arthrobacter chlorophenolicus) protein is Carbamoyl phosphate synthase large chain.